The sequence spans 248 residues: Probable transcriptional regulatory protein Fphi_1565 (248 aa).

It belongs to the TACO1 family.

It localises to the cytoplasm. This chain is Probable transcriptional regulatory protein Fphi_1565, found in Francisella philomiragia subsp. philomiragia (strain ATCC 25017 / CCUG 19701 / FSC 153 / O#319-036).